Here is a 272-residue protein sequence, read N- to C-terminus: Phosphoglycolate phosphatase (272 aa).

Residue Asp-19 is the Nucleophile of the active site. Residues Asp-19, Asp-21, and Asp-182 each contribute to the Mg(2+) site.

Belongs to the HAD-like hydrolase superfamily. CbbY/CbbZ/Gph/YieH family. The cofactor is Mg(2+).

The catalysed reaction is 2-phosphoglycolate + H2O = glycolate + phosphate. It participates in organic acid metabolism; glycolate biosynthesis; glycolate from 2-phosphoglycolate: step 1/1. Its function is as follows. Specifically catalyzes the dephosphorylation of 2-phosphoglycolate. Is involved in the dissimilation of the intracellular 2-phosphoglycolate formed during the DNA repair of 3'-phosphoglycolate ends, a major class of DNA lesions induced by oxidative stress. The protein is Phosphoglycolate phosphatase of Pseudomonas fluorescens (strain Pf0-1).